Consider the following 720-residue polypeptide: Catalase-peroxidase (720 aa).

An N-terminal signal peptide occupies residues 1–21 (MSENKCPVMHGSATTTENSMA). The segment at residues 94–222 (WHAAGTYRIA…LAAVMMGLIY (129 aa)) is a cross-link (tryptophyl-tyrosyl-methioninium (Trp-Tyr) (with M-248)). H95 functions as the Proton acceptor in the catalytic mechanism. A cross-link (tryptophyl-tyrosyl-methioninium (Tyr-Met) (with W-94)) is located at residues 222–248 (YVNPEGVDGKPDPLKTAQDIRETFARM). H263 serves as a coordination point for heme b.

Belongs to the peroxidase family. Peroxidase/catalase subfamily. Homodimer or homotetramer. It depends on heme b as a cofactor. In terms of processing, formation of the three residue Trp-Tyr-Met cross-link is important for the catalase, but not the peroxidase activity of the enzyme.

It catalyses the reaction H2O2 + AH2 = A + 2 H2O. The catalysed reaction is 2 H2O2 = O2 + 2 H2O. Its function is as follows. Bifunctional enzyme with both catalase and broad-spectrum peroxidase activity. This Shewanella denitrificans (strain OS217 / ATCC BAA-1090 / DSM 15013) protein is Catalase-peroxidase.